The following is a 370-amino-acid chain: Gap junction delta-4 protein (370 aa).

The Cytoplasmic segment spans residues 1 to 19; that stretch reads MEGVDLLGFLIITLNCNVT. A helical membrane pass occupies residues 20-40; it reads MXGKLWFVLTMLLRMLVIVLA. The Extracellular portion of the chain corresponds to 41–76; that stretch reads GRPVYQDEQERFVCNTLQPGCANVCYDVFSPVSHLR. Residues 77–97 form a helical membrane-spanning segment; that stretch reads FWLIQGVCVLLPSAVFSVYVL. Over 98-146 the chain is Cytoplasmic; sequence HRGATLAALGPRRCPEPRDTASGQRRCPGSCRERGGLEVPDFSAGYIIH. Residues 147-167 traverse the membrane as a helical segment; that stretch reads LLLRTLLEAAFGALNYLLFGF. The Extracellular portion of the chain corresponds to 168-196; that stretch reads LAPNKFPCTRPPCTGVVDCYVSRPTEKSL. Residues 197 to 217 form a helical membrane-spanning segment; that stretch reads LMLFLWAVSALSFLLGLADLV. The Cytoplasmic segment spans residues 218-370; that stretch reads CSLRRLMRRR…HLRARKSEWV (153 aa). The disordered stretch occupies residues 227-370; it reads RPGPPTSPSI…HLRARKSEWV (144 aa). Residues 246–260 show a composition bias toward basic and acidic residues; it reads PEGRPTDKEGGREQE. Over residues 331–345 the composition is skewed to low complexity; sequence PSAAPSHLAAHPSCS.

Belongs to the connexin family. Delta-type subfamily. As to quaternary structure, a connexon is composed of a hexamer of connexins.

It is found in the cell membrane. The protein resides in the cell junction. It localises to the gap junction. Its function is as follows. One gap junction consists of a cluster of closely packed pairs of transmembrane channels, the connexons, through which materials of low MW diffuse from one cell to a neighboring cell. This is Gap junction delta-4 protein (GJD4) from Macaca fascicularis (Crab-eating macaque).